Here is a 224-residue protein sequence, read N- to C-terminus: Flagellar L-ring protein (224 aa).

Residues 1 to 15 form the signal peptide; it reads MARYFILAAALLLTA. Cys-16 carries N-palmitoyl cysteine lipidation. Residue Cys-16 is the site of S-diacylglycerol cysteine attachment.

The protein belongs to the FlgH family. The basal body constitutes a major portion of the flagellar organelle and consists of four rings (L,P,S, and M) mounted on a central rod.

The protein localises to the cell outer membrane. The protein resides in the bacterial flagellum basal body. Its function is as follows. Assembles around the rod to form the L-ring and probably protects the motor/basal body from shearing forces during rotation. This chain is Flagellar L-ring protein, found in Shewanella sp. (strain MR-4).